Here is a 639-residue protein sequence, read N- to C-terminus: Pheromone B alpha 1 receptor (639 aa).

Helical transmembrane passes span 8 to 28 (LFPIFAFLGFVLAILPLPWHL), 37 to 57 (FFMMWTALGCLNQFINSVAWA), 70 to 90 (ISIRILMGASVGIPASSLCII), 113 to 133 (ILVDALICVLFPLVYIALQYI), 163 to 183 (VWPVLLGLISATYGVMALLQF), 209 to 229 (MALALTEMMCTMPLGIFVIVL), and 272 to 292 (LTRWCAPVSAFIFFFYFGFAE). Disordered stretches follow at residues 375-416 (PRPM…SSPI), 490-516 (TVPHHSTADEPASPALPDTPSSCSSSA), 532-563 (SADVTRRDSGSSAGGVASTSRPTRAGPPRLPS), and 611-639 (TTAGAPATTTPDRGEPDVPTSPRTHRASV). The segment covering 383–398 (SSSGFSSSDSTRFGSS) has biased composition (low complexity). Low complexity-rich tracts occupy residues 541–551 (GSSAGGVASTS) and 611–621 (TTAGAPATTTP).

It belongs to the G-protein coupled receptor 4 family.

The protein localises to the membrane. Its function is as follows. Receptor for the BAP1 pheromone, a prenylated mating factor. Has a role in the initiation of B-regulated nuclear migration. The chain is Pheromone B alpha 1 receptor (BAR1) from Schizophyllum commune (Split gill fungus).